Reading from the N-terminus, the 182-residue chain is MLEKLVTSLETCPMVQRNGYNYFIHPISDGVPIVEPELLREIGCAMVKMLDLDKVDKIVVAEAMGIHIGTVLSLMTGIPMNIVRKREYKLPGEVAVHQTTGYSKGELYLNGLFAGDRVVIIDDVISTGGTARALLSALGQIGVDVVDICVVIQRGNPDIGRDYKSLTKIEVNERVHVIDKHC.

It belongs to the purine/pyrimidine phosphoribosyltransferase family. Archaeal HPRT subfamily. As to quaternary structure, homodimer.

Its subcellular location is the cytoplasm. It carries out the reaction IMP + diphosphate = hypoxanthine + 5-phospho-alpha-D-ribose 1-diphosphate. The catalysed reaction is GMP + diphosphate = guanine + 5-phospho-alpha-D-ribose 1-diphosphate. Its pathway is purine metabolism; IMP biosynthesis via salvage pathway; IMP from hypoxanthine: step 1/1. Functionally, catalyzes a salvage reaction resulting in the formation of IMP that is energically less costly than de novo synthesis. In Methanosphaerula palustris (strain ATCC BAA-1556 / DSM 19958 / E1-9c), this protein is Hypoxanthine/guanine phosphoribosyltransferase.